The chain runs to 191 residues: MPKASEVKKNTAIEFNNNVYLIRDIERSVPQGRSGGSLYRMRMYDVATGSKLDHTFKADEMINLADLSRHEVSFSYIDGDEYVFMDIADYTPYHFNKDSIADEILFINEETQGLQVLTVDGTPVAIELPANVELVIVETDPSIKGASASARTKPAILSTGLSVQVPEYIANGEKIKINTAEHKFMSRADSK.

Belongs to the elongation factor P family.

The polypeptide is Elongation factor P-like protein (Shewanella sediminis (strain HAW-EB3)).